We begin with the raw amino-acid sequence, 352 residues long: MSDSPVTLPESIKLTEYSHGAGCGCKISPKVLSTILASQLPVFTDPNLLVGNQSRDDAAVYKLNDDIGIISTTDFFMPIVDDPFTFGRIAATNAISDIYAMGGTPIMAIAILGWPINKLPAEVAQQVVDGGRQACMEAGIMLAGGHSIDAPEPIFGLAVTGQIALTDLKQNDTAKAGDRLYLTKPIGIGILTTAQKQKKLQDEDSHIAVNAMCQLNTIGTTIAKISGVNALTDVTGFGLAGHLLEMCQGAKLTAKLKFDAVPLLPRALDYLALGCVPGGTHRNYDSYGEHLPELSEHQKAILCDPQTSGGLLVAVSAEAEAELIALLDAHHIAPICIGSLETPTTEANVVLY.

The active site involves C23. Residues K26 and 54–56 (SRD) contribute to the ATP site. Mg(2+) is bound at residue D57. Residues D74, D97, and 145–147 (GHS) contribute to the ATP site. D97 contributes to the Mg(2+) binding site. D233 provides a ligand contact to Mg(2+).

Belongs to the selenophosphate synthase 1 family. Class I subfamily. In terms of assembly, homodimer. The cofactor is Mg(2+).

The enzyme catalyses hydrogenselenide + ATP + H2O = selenophosphate + AMP + phosphate + 2 H(+). Functionally, synthesizes selenophosphate from selenide and ATP. The polypeptide is Selenide, water dikinase (Shewanella baltica (strain OS185)).